Here is a 172-residue protein sequence, read N- to C-terminus: Galectin-related protein (172 aa).

The residue at position 2 (Ala-2) is an N-acetylalanine. 2 positions are modified to phosphoserine: Ser-22 and Ser-25. Positions 39-168 (PFCGHIKGGM…TIKINGDLQI (130 aa)) constitute a Galectin domain.

As to quaternary structure, monomer.

In terms of biological role, does not bind lactose, and may not bind carbohydrates. The sequence is that of Galectin-related protein (LGALSL) from Homo sapiens (Human).